The following is a 366-amino-acid chain: Ribosomal RNA large subunit methyltransferase M (366 aa).

Residues S188, 221–224, D240, D260, and D277 contribute to the S-adenosyl-L-methionine site; that span reads CPGG. Catalysis depends on K306, which acts as the Proton acceptor.

It belongs to the class I-like SAM-binding methyltransferase superfamily. RNA methyltransferase RlmE family. RlmM subfamily. As to quaternary structure, monomer.

It localises to the cytoplasm. The catalysed reaction is cytidine(2498) in 23S rRNA + S-adenosyl-L-methionine = 2'-O-methylcytidine(2498) in 23S rRNA + S-adenosyl-L-homocysteine + H(+). Its function is as follows. Catalyzes the 2'-O-methylation at nucleotide C2498 in 23S rRNA. This chain is Ribosomal RNA large subunit methyltransferase M, found in Musicola paradisiaca (strain Ech703) (Dickeya paradisiaca).